The following is a 428-amino-acid chain: Histone deacetylase 3 (428 aa).

Residues 3 to 316 (KTVAYFYDPD…WTYETSLLVD (314 aa)) are histone deacetylase. 1D-myo-inositol 1,4,5,6-tetrakisphosphate is bound by residues His-17, Gly-21, and Lys-25. The active site involves His-135. Residues Asp-170, His-172, and Asp-259 each coordinate Zn(2+). Arg-265 is a binding site for 1D-myo-inositol 1,4,5,6-tetrakisphosphate. The segment at 385–428 (LSYDRTDEPDPEERGSEENYSRPEAANEFYDGDHDNDKESDVEI) is disordered. Composition is skewed to basic and acidic residues over residues 386–405 (SYDR…ENYS) and 415–428 (DGDH…DVEI).

This sequence belongs to the histone deacetylase family. HD type 1 subfamily.

It is found in the nucleus. It localises to the chromosome. The protein resides in the cytoplasm. The protein localises to the cytosol. The enzyme catalyses N(6)-acetyl-L-lysyl-[histone] + H2O = L-lysyl-[histone] + acetate. It carries out the reaction N(6)-acetyl-L-lysyl-[protein] + H2O = L-lysyl-[protein] + acetate. The catalysed reaction is N(6)-(2E)-butenoyl-L-lysyl-[protein] + H2O = (2E)-2-butenoate + L-lysyl-[protein]. It catalyses the reaction N(6)-(2-hydroxyisobutanoyl)-L-lysyl-[protein] + H2O = 2-hydroxy-2-methylpropanoate + L-lysyl-[protein]. The enzyme catalyses N(6)-[(S)-lactoyl]-L-lysyl-[protein] + H2O = (S)-lactate + L-lysyl-[protein]. Its activity is regulated as follows. Inositol tetraphosphate (1D-myo-inositol 1,4,5,6-tetrakisphosphate) promotes the histone deacetylase activity by acting as an intermolecular glue between HDAC3 and N-Cor repressor complex components. Its function is as follows. Histone deacetylase that catalyzes the deacetylation of lysine residues on the N-terminal part of the core histones (H2A, H2B, H3 and H4), and some other non-histone substrates. Histone deacetylation gives a tag for epigenetic repression and plays an important role in transcriptional regulation, cell cycle progression and developmental events. Histone deacetylases act via the formation of large multiprotein complexes, such as N-Cor repressor complex, which activate the histone deacetylase activity. Participates in the BCL6 transcriptional repressor activity by deacetylating the H3 'Lys-27' (H3K27) on enhancer elements, antagonizing EP300 acetyltransferase activity and repressing proximal gene expression. Also functions as a deacetylase for non-histone targets. In addition to protein deacetylase activity, also acts as a protein-lysine deacylase by recognizing other acyl groups: catalyzes removal of (2E)-butenoyl (crotonyl), lactoyl (lactyl) and 2-hydroxyisobutanoyl (2-hydroxyisobutyryl) acyl groups from lysine residues, leading to protein decrotonylation, delactylation and de-2-hydroxyisobutyrylation, respectively. The protein is Histone deacetylase 3 (HDAC3) of Gallus gallus (Chicken).